The chain runs to 1405 residues: DNA-directed RNA polymerase subunit beta' (1405 aa).

Residues C70, C72, C85, and C88 each coordinate Zn(2+). Residues D460, D462, and D464 each contribute to the Mg(2+) site. 4 residues coordinate Zn(2+): C814, C888, C895, and C898.

Belongs to the RNA polymerase beta' chain family. The RNAP catalytic core consists of 2 alpha, 1 beta, 1 beta' and 1 omega subunit. When a sigma factor is associated with the core the holoenzyme is formed, which can initiate transcription. It depends on Mg(2+) as a cofactor. The cofactor is Zn(2+).

The enzyme catalyses RNA(n) + a ribonucleoside 5'-triphosphate = RNA(n+1) + diphosphate. In terms of biological role, DNA-dependent RNA polymerase catalyzes the transcription of DNA into RNA using the four ribonucleoside triphosphates as substrates. This chain is DNA-directed RNA polymerase subunit beta', found in Shewanella putrefaciens (strain CN-32 / ATCC BAA-453).